The primary structure comprises 321 residues: Isoaspartyl peptidase (321 aa).

Threonine 179 acts as the Nucleophile in catalysis. Substrate-binding positions include 207 to 210 (RVGD) and 230 to 233 (TGTG).

It belongs to the Ntn-hydrolase family. Heterotetramer of two alpha and two beta chains arranged as a dimer of alpha/beta heterodimers. Autocleaved. Generates the alpha and beta subunits. The N-terminal residue of the beta subunit is thought to be responsible for the nucleophile hydrolase activity. Post-translationally, both subunits undergo further processing at their C-termini. The overexpressed alpha subunit seems to consist of residues 2-161, with an oxidized Met residue and a tightly coordinated Na(+), whereas the overexpressed beta subunit is processed to residue 315 and has 3 oxidized Met residues. Processing of the alpha subunit is inhibited by Zn(2+).

It carries out the reaction Cleavage of a beta-linked Asp residue from the N-terminus of a polypeptide.. Functionally, degrades proteins damaged by L-isoaspartyl residue formation (also known as beta-Asp residues). Degrades L-isoaspartyl-containing di- and maybe also tripeptides. Also has L-asparaginase activity, although this may not be its principal function. Its function is as follows. May be involved in glutathione, and possibly other peptide, transport, although these results could also be due to polar effects of disruption. The chain is Isoaspartyl peptidase (iaaA) from Escherichia coli (strain K12).